An 81-amino-acid polypeptide reads, in one-letter code: Conotoxin Im6.1 (81 aa).

An N-terminal signal peptide occupies residues 1–20 (MSKLGVVLFTLLLLVPLVTP). The propeptide occupies 21-47 (ERDGGKWTMLAKNKKAMKRNLMDFITR). 3 disulfide bridges follow: C49/C61, C54/C67, and C60/C76.

Belongs to the conotoxin M superfamily. Expressed by the venom duct.

Its subcellular location is the secreted. In Conus imperialis (Imperial cone), this protein is Conotoxin Im6.1.